Here is a 344-residue protein sequence, read N- to C-terminus: Phosphoribosylformylglycinamidine cyclo-ligase (344 aa).

This sequence belongs to the AIR synthase family.

The protein resides in the cytoplasm. The enzyme catalyses 2-formamido-N(1)-(5-O-phospho-beta-D-ribosyl)acetamidine + ATP = 5-amino-1-(5-phospho-beta-D-ribosyl)imidazole + ADP + phosphate + H(+). Its pathway is purine metabolism; IMP biosynthesis via de novo pathway; 5-amino-1-(5-phospho-D-ribosyl)imidazole from N(2)-formyl-N(1)-(5-phospho-D-ribosyl)glycinamide: step 2/2. This chain is Phosphoribosylformylglycinamidine cyclo-ligase, found in Neisseria meningitidis serogroup B (strain ATCC BAA-335 / MC58).